The sequence spans 142 residues: Photosystem II extrinsic protein U (142 aa).

Positions 1–28 (MKKIGLLLTIFSLCLGCLGLVPSDKAHA) are cleaved as a signal peptide.

The protein belongs to the PsbU family. As to quaternary structure, PSII is composed of 1 copy each of membrane proteins PsbA, PsbB, PsbC, PsbD, PsbE, PsbF, PsbH, PsbI, PsbJ, PsbK, PsbL, PsbM, PsbT, PsbX, PsbY, PsbZ, Psb30/Ycf12, peripheral proteins PsbO, CyanoQ (PsbQ), PsbU, PsbV and a large number of cofactors. It forms dimeric complexes.

It is found in the cellular thylakoid membrane. Functionally, one of the extrinsic, lumenal subunits of photosystem II (PSII). PSII is a light-driven water plastoquinone oxidoreductase, using light energy to abstract electrons from H(2)O, generating a proton gradient subsequently used for ATP formation. The extrinsic proteins stabilize the structure of photosystem II oxygen-evolving complex (OEC), the ion environment of oxygen evolution and protect the OEC against heat-induced inactivation. The chain is Photosystem II extrinsic protein U from Trichodesmium erythraeum (strain IMS101).